Consider the following 1007-residue polypeptide: Inversin-A (1007 aa).

ANK repeat units lie at residues 9–39 (SLAS…VIDQ), 43–72 (LGRT…QVNH), 76–105 (SGRT…DCTH), 109–140 (RDIT…QVDA), 144–173 (RKQT…NIGI), 177–209 (EGKI…TESL), 216–246 (EGRT…NVAP), 250–279 (LFRT…SPNI), 284–313 (QGAT…VRDE), 317–346 (EGRT…ELEV), 352–381 (YGGT…QVDA), 385–414 (MKHT…KVHL), 418–447 (DGRS…NPDA), 451–480 (EGRT…DPNI), 484–513 (NGRT…FPNQ), and 519–549 (ERYT…SIAA). Positions 486 to 494 (RTALHWSCN) match the D-box 1 motif. An IQ 1 domain is found at 551-580 (QDIAASKIQAVYKGHKVRRAFQERKNLLMK). 2 stretches are compositionally biased toward basic and acidic residues: residues 585 to 599 (RKGA…ENRQ) and 608 to 652 (GKQK…HQEE). 2 disordered regions span residues 585–837 (RKGA…KEFS) and 868–893 (SAKS…SALK). The segment covering 684–701 (IQSSPIEHVHTNSIQTRM) has biased composition (polar residues). Low complexity predominate over residues 702 to 712 (SPSRTSISHSS). A compositionally biased stretch (polar residues) spans 727-745 (NPTQNNTQPRRTSRPQIES). Basic and acidic residues predominate over residues 751 to 771 (HRIEDLVQKESRRKSHREERK). Positions 772-784 (GSHRQRASSHHRL) are enriched in basic residues. The segment covering 870–893 (KSGQRPLTETQSPEKACQGSSALK) has biased composition (polar residues). Residues 964 to 972 (RKQLFQRKK) carry the D-box 2 motif. In terms of domain architecture, IQ 2 spans 971 to 1000 (KKHAATVIQKAWRTYCIRKSSRKTRHSHLR).

As to quaternary structure, interacts with apc2. Binds calmodulin.

The protein localises to the cytoplasm. It localises to the cytoskeleton. Functionally, required for normal renal development and establishment of left-right axis. Probably acts as a molecular switch between different Wnt signaling pathways. Inhibits the canonical Wnt pathway by targeting cytoplasmic disheveled for degradation by the ubiquitin-proteasome. This suggests that it is required in renal development to oppose the repression of terminal differentiation of tubular epithelial cells by Wnt signaling. Plays a central role in convergent extension movements in gastrulating embryos, a processus regulated by Wnt signaling. This chain is Inversin-A (invs-a), found in Xenopus laevis (African clawed frog).